The sequence spans 130 residues: Large ribosomal subunit protein uL22 (130 aa).

The protein belongs to the universal ribosomal protein uL22 family. Part of the 50S ribosomal subunit.

This protein binds specifically to 23S rRNA; its binding is stimulated by other ribosomal proteins, e.g. L4, L17, and L20. It is important during the early stages of 50S assembly. It makes multiple contacts with different domains of the 23S rRNA in the assembled 50S subunit and ribosome. Its function is as follows. The globular domain of the protein is located near the polypeptide exit tunnel on the outside of the subunit, while an extended beta-hairpin is found that lines the wall of the exit tunnel in the center of the 70S ribosome. This Clavibacter sepedonicus (Clavibacter michiganensis subsp. sepedonicus) protein is Large ribosomal subunit protein uL22.